The following is a 108-amino-acid chain: Vitelline membrane protein 15a-1 (108 aa).

Residues 1–18 (MNKFIILAIFALAVGAMA) form the signal peptide. One can recognise a VM domain in the interval 52–88 (HAPHAKCGANLLVGCAPSVAHVPCVPLPGHAPAHGYG). Residues 87-108 (YGHAPAPHYRAPESDSFDQFEE) form a disordered region.

Belongs to the vitelline membrane family. In terms of tissue distribution, expressed in the middle and posterior regions of the follicle cells.

It localises to the secreted. The protein is Vitelline membrane protein 15a-1 of Aedes aegypti (Yellowfever mosquito).